Reading from the N-terminus, the 256-residue chain is Carboxysome shell protein CsoS1D (256 aa).

A disordered region spans residues 1–24 (MEPTSSLNRGDRKKGSSLVTGSEV). BMC circularly permuted domains follow at residues 55-157 (ELRT…RTKP) and 158-256 (STSW…ISNY). Positions 120 to 121 (ER) match the Gates the pore motif.

Belongs to the EutL/PduB family. In terms of assembly, homotrimer. Forms a dimer of stacked trimers, the same faces interact. A CsoS1-CsoS1D-CsoS2 complex can be isolated following expression in E.coli.

It is found in the carboxysome. Functionally, part of the carboxysome shell, a polyhedral inclusion where RuBisCO (ribulose bisphosphate carboxylase, cbbL-cbbS) is sequestered. It may control transport of RuBisCO reactants in and out of the carboxysome. There are estimated to be 6 CsoS1D hexamers per carboxysome. This is Carboxysome shell protein CsoS1D from Prochlorococcus marinus subsp. pastoris (strain CCMP1986 / NIES-2087 / MED4).